A 507-amino-acid polypeptide reads, in one-letter code: Maturase K (507 aa).

This sequence belongs to the intron maturase 2 family. MatK subfamily.

The protein resides in the plastid. It localises to the chloroplast. Its function is as follows. Usually encoded in the trnK tRNA gene intron. Probably assists in splicing its own and other chloroplast group II introns. The protein is Maturase K of Fagopyrum tataricum (Tartarian buckwheat).